A 299-amino-acid polypeptide reads, in one-letter code: Protoheme IX farnesyltransferase (299 aa).

Transmembrane regions (helical) follow at residues 26-46, 53-73, 94-114, 121-141, 149-169, 175-195, 217-239, 243-265, and 277-297; these read VNAL…PDGL, FAAT…NCLI, LHSV…LSVL, LTMW…TLLL, IVIG…AVSG, ALLL…SLAL, YTRL…PFAI, GWIY…WRLL, and FRFS…DHYL.

Belongs to the UbiA prenyltransferase family. Protoheme IX farnesyltransferase subfamily.

The protein localises to the cell inner membrane. The enzyme catalyses heme b + (2E,6E)-farnesyl diphosphate + H2O = Fe(II)-heme o + diphosphate. Its pathway is porphyrin-containing compound metabolism; heme O biosynthesis; heme O from protoheme: step 1/1. Converts heme B (protoheme IX) to heme O by substitution of the vinyl group on carbon 2 of heme B porphyrin ring with a hydroxyethyl farnesyl side group. This Azoarcus sp. (strain BH72) protein is Protoheme IX farnesyltransferase.